The chain runs to 277 residues: Kallikrein-13 (277 aa).

A signal peptide spans 1–16 (MWPLALVIASLTLALS). N30 is a glycosylation site (N-linked (GlcNAc...) asparagine). Residues 36–263 (LPGGYTCFPH…YVLWIRETIR (228 aa)) enclose the Peptidase S1 domain. Intrachain disulfides connect C42-C178, C61-C77, C157-C224, C189-C203, and C214-C239. Residues H76 and D124 each act as charge relay system in the active site. The Charge relay system role is filled by S218. N225 carries N-linked (GlcNAc...) asparagine glycosylation.

This sequence belongs to the peptidase S1 family. Kallikrein subfamily. As to expression, expressed in prostate, breast, testis and salivary gland.

Its subcellular location is the secreted. In Homo sapiens (Human), this protein is Kallikrein-13 (KLK13).